The chain runs to 36 residues: Ostricacin-1 (36 aa).

Cystine bridges form between Cys3-Cys29, Cys8-Cys23, and Cys13-Cys30.

It localises to the secreted. In terms of biological role, has antibacterial activity against the Gram-positive bacteria S.aureus 1056 MRSA (MIC=1.25 ug/ml) and S.aureus NCTC 4163 (MIC=6.7 ug/ml), and the Gram-negative bacteria E.coli O157:H7 (MIC=0.96 ug/ml) and E.coli 0111 (MIC=6.7 ug/ml). Does not have antifungal activity against the yeast C.albicans 3153A. This chain is Ostricacin-1, found in Struthio camelus (Common ostrich).